The chain runs to 179 residues: Large ribosomal subunit protein uL6 (179 aa).

The protein belongs to the universal ribosomal protein uL6 family. Part of the 50S ribosomal subunit.

Functionally, this protein binds to the 23S rRNA, and is important in its secondary structure. It is located near the subunit interface in the base of the L7/L12 stalk, and near the tRNA binding site of the peptidyltransferase center. The polypeptide is Large ribosomal subunit protein uL6 (Finegoldia magna (strain ATCC 29328 / DSM 20472 / WAL 2508) (Peptostreptococcus magnus)).